Reading from the N-terminus, the 66-residue chain is Large ribosomal subunit protein uL29 (66 aa).

It belongs to the universal ribosomal protein uL29 family.

The protein is Large ribosomal subunit protein uL29 of Kosmotoga olearia (strain ATCC BAA-1733 / DSM 21960 / TBF 19.5.1).